The following is a 350-amino-acid chain: 3-dehydroquinate synthase (350 aa).

NAD(+)-binding positions include 106 to 110, 130 to 131, K143, and K152; these read GVVGD and TS. Residues E185, H246, and H263 each coordinate Zn(2+).

This sequence belongs to the sugar phosphate cyclases superfamily. Dehydroquinate synthase family. Co(2+) is required as a cofactor. The cofactor is Zn(2+). It depends on NAD(+) as a cofactor.

Its subcellular location is the cytoplasm. The catalysed reaction is 7-phospho-2-dehydro-3-deoxy-D-arabino-heptonate = 3-dehydroquinate + phosphate. The protein operates within metabolic intermediate biosynthesis; chorismate biosynthesis; chorismate from D-erythrose 4-phosphate and phosphoenolpyruvate: step 2/7. Functionally, catalyzes the conversion of 3-deoxy-D-arabino-heptulosonate 7-phosphate (DAHP) to dehydroquinate (DHQ). This chain is 3-dehydroquinate synthase, found in Clostridium perfringens (strain SM101 / Type A).